We begin with the raw amino-acid sequence, 363 residues long: sn-glycerol-3-phosphate import ATP-binding protein UgpC (363 aa).

Residues 4-235 (VVLRNVRKTY…PATTFVASFI (232 aa)) enclose the ABC transporter domain. 37–44 (GPSGCGKS) serves as a coordination point for ATP.

This sequence belongs to the ABC transporter superfamily. sn-glycerol-3-phosphate importer (TC 3.A.1.1.3) family. As to quaternary structure, the complex is composed of two ATP-binding proteins (UgpC), two transmembrane proteins (UgpA and UgpE) and a solute-binding protein (UgpB).

The protein localises to the cell inner membrane. The catalysed reaction is sn-glycerol 3-phosphate(out) + ATP + H2O = sn-glycerol 3-phosphate(in) + ADP + phosphate + H(+). In terms of biological role, part of the ABC transporter complex UgpBAEC involved in sn-glycerol-3-phosphate (G3P) import. Responsible for energy coupling to the transport system. The chain is sn-glycerol-3-phosphate import ATP-binding protein UgpC from Rhodopseudomonas palustris (strain ATCC BAA-98 / CGA009).